Consider the following 796-residue polypeptide: Disintegrin and metalloproteinase domain-containing protein B (796 aa).

Positions 1–23 are cleaved as a signal peptide; the sequence is MKALSCLLAVIATAGSLFQHVDA. Topologically, residues 24-706 are extracellular; sequence RSHARDRLNN…VSDWVSRHKP (683 aa). N-linked (GlcNAc...) asparagine glycosylation is found at N33, N226, N313, and N407. One can recognise a Peptidase M12B domain in the interval 271-510; sequence RVALIGVVAD…HSILTNCLTT (240 aa). 3 cysteine pairs are disulfide-bonded: C395-C495, C448-C459, and C580-C600. Zn(2+) is bound at residue H431. The active site involves E432. Zn(2+) contacts are provided by H435 and H441. One can recognise a Disintegrin domain in the interval 519 to 608; sequence GQQCGNGIVE…DCPRDTHSKN (90 aa). The helical transmembrane segment at 707 to 727 threads the bilayer; that stretch reads IVIGVAVGVGCLLLLAILSCI. Topologically, residues 728–796 are cytoplasmic; that stretch reads CGRSKKRRPR…PGRMPSTRYA (69 aa). The segment at 737 to 796 is disordered; the sequence is RNRKMAPINMRPMPPVYNGWTGPPPNAESPGGHPQYNHVPPPINAPPPAYPGRMPSTRYA. Pro residues predominate over residues 775–786; sequence VPPPINAPPPAY.

Zn(2+) is required as a cofactor.

Its subcellular location is the membrane. Probable zinc protease. The polypeptide is Disintegrin and metalloproteinase domain-containing protein B (ADM-B) (Arthroderma otae (strain ATCC MYA-4605 / CBS 113480) (Microsporum canis)).